Consider the following 152-residue polypeptide: Nuclear cap-binding protein subunit 2 (152 aa).

MRNA-binding positions include Y8, Y31, 100 to 104, 111 to 115, and 121 to 122; these read RTDWD, RQFGR, and QV. Residues 28–106 enclose the RRM domain; it reads TTLYVGNMSF…RIIRTDWDAG (79 aa).

The protein belongs to the RRM NCBP2 family. Component of the nuclear cap-binding complex (CBC), a heterodimer composed of Cbp80 and Cbp20 that interacts with m7GpppG-capped RNA.

It localises to the nucleus. Functionally, component of the cap-binding complex (CBC), which binds co-transcriptionally to the 5' cap of pre-mRNAs and is involved in various processes such as pre-mRNA splicing and RNA-mediated gene silencing (RNAi). The CBC complex is involved in miRNA-mediated RNA interference and is required for primary microRNAs (miRNAs) processing. Also involved in innate immunity via the short interfering RNAs (siRNAs) processing machinery by restricting the viral RNA production. In the CBC complex, Cbp20 recognizes and binds capped RNAs (m7GpppG-capped RNA) but requires Cbp80 to stabilize the movement of its N-terminal loop and lock the CBC into a high affinity cap-binding state with the cap structure. In Ixodes scapularis (Black-legged tick), this protein is Nuclear cap-binding protein subunit 2 (Cbp20).